The primary structure comprises 973 residues: Peptidyl-glycine alpha-amidating monooxygenase (973 aa).

The N-terminal stretch at 1 to 20 (MAGRVPSLLVLLVFPSSCLA) is a signal peptide. The segment at 1–494 (MAGRVPSLLV…EGTWEPEHTG (494 aa)) is peptidylglycine alpha-hydroxylating monooxygenase. Positions 21–30 (FRSPLSVFKR) are excised as a propeptide. Residues 31–863 (FKETTRPFSN…QKLIKEPGSG (833 aa)) lie on the Intragranular side of the membrane. 5 cysteine pairs are disulfide-bonded: C42-C181, C76-C121, C109-C126, C222-C329, and C288-C310. 2 residues coordinate Cu(2+): H102 and H103. Cu(2+) contacts are provided by H167, H237, H239, and M309. The tract at residues 495–817 (DFHMEEALDW…LTEKLEHRSV (323 aa)) is peptidyl-alpha-hydroxyglycine alpha-amidating lyase. NHL repeat units follow at residues 498–541 (MEEA…NSFD), 567–608 (AAVL…LDPN), 617–662 (LGRS…FSPS), and 670–714 (GEES…FKTD). V517 contacts Ca(2+). R530 contacts a protein. H582 provides a ligand contact to Zn(2+). L584 contacts Ca(2+). Residues C631 and C652 are joined by a disulfide bond. A protein is bound at residue Y651. A Zn(2+)-binding site is contributed by H687. C699 and C710 are oxidised to a cystine. R703 serves as a coordination point for a protein. N-linked (GlcNAc...) asparagine glycosylation occurs at N762. The NHL 5 repeat unit spans residues 766 to 809 (GEIIDIFKPVRKHFDMPHDIVASEDGTVYIGDAHTNTVWKFTLT). Residue H783 participates in Zn(2+) binding. A Ca(2+)-binding site is contributed by D784. Residues 864 to 887 (VPVVLITTLLVIPVVVLLAIAIFI) form a helical membrane-spanning segment. 2 positions are modified to sulfotyrosine: I875 and R893. Over 888–973 (RWKKSRAFGD…PLPALAPSSS (86 aa)) the chain is Cytoplasmic. 3 positions are modified to phosphoserine: S918, S929, and S942. The interaction with RASSF9 stretch occupies residues 925–942 (NFFASRKGYSRKGFDRLS). A disordered region spans residues 937–973 (GFDRLSTEGSDQEKEDDGSESEEEYSAPLPALAPSSS). T943 carries the post-translational modification Phosphothreonine. At S946 the chain carries Phosphoserine; by UHMK1; in vitro. The span at 949–961 (EKEDDGSESEEEY) shows a compositional bias: acidic residues. At S957 the chain carries Phosphoserine. A compositionally biased stretch (low complexity) spans 962–973 (SAPLPALAPSSS).

This sequence in the C-terminal section; belongs to the peptidyl-alpha-hydroxyglycine alpha-amidating lyase family. The protein in the N-terminal section; belongs to the copper type II ascorbate-dependent monooxygenase family. Monomer. Interacts with RASSF9. It depends on Zn(2+) as a cofactor. Cu(2+) serves as cofactor.

The protein localises to the cytoplasmic vesicle. It is found in the secretory vesicle membrane. The protein resides in the membrane. Its subcellular location is the secreted. It catalyses the reaction a [peptide]-C-terminal glycine + 2 L-ascorbate + O2 = a [peptide]-C-terminal (2S)-2-hydroxyglycine + 2 monodehydro-L-ascorbate radical + H2O. It carries out the reaction a [peptide]-C-terminal (2S)-2-hydroxyglycine = a [peptide]-C-terminal amide + glyoxylate. The enzyme catalyses N-dodecanoylglycine + 2 L-ascorbate + O2 = N-dodecanoyl-(2S)-hydroxyglycine + 2 monodehydro-L-ascorbate radical + H2O. The catalysed reaction is N-dodecanoyl-(2S)-hydroxyglycine = dodecanamide + glyoxylate. It catalyses the reaction N-(9Z,12Z,15Z)-octadecatrienoylglycine + 2 L-ascorbate + O2 = N-(9Z,12Z,15Z)-octadecatrienoyl-(2S)-hydroxyglycine + 2 monodehydro-L-ascorbate radical + H2O. It carries out the reaction N-(9Z,12Z,15Z)-octadecatrienoyl-(2S)-hydroxyglycine = (9Z,12Z,15Z)-octadecatrienamide + glyoxylate. The enzyme catalyses N-(9Z-octadecenoyl)glycine + 2 L-ascorbate + O2 = N-(9Z-octadecenoyl)-(2S)-hydroxyglycine + 2 monodehydro-L-ascorbate radical + H2O. The catalysed reaction is N-(9Z-octadecenoyl)-(2S)-hydroxyglycine = (9Z)-octadecenamide + glyoxylate. It catalyses the reaction N-tetradecanoylglycine + 2 L-ascorbate + O2 = N-tetradecanoyl-(2S)-hydroxyglycine + 2 monodehydro-L-ascorbate radical + H2O. It carries out the reaction N-tetradecanoyl-(2S)-hydroxyglycine = tetradecamide + glyoxylate. The enzyme catalyses N-decanoylglycine + 2 L-ascorbate + O2 = N-decanoyl-(2S)-hydroxyglycine + 2 monodehydro-L-ascorbate radical + H2O. The catalysed reaction is N-decanoyl-(2S)-hydroxyglycine = decanamide + glyoxylate. It catalyses the reaction N-octanoylglycine + 2 L-ascorbate + O2 = N-octanoyl-(2S)-hydroxyglycine + 2 monodehydro-L-ascorbate radical + H2O. It carries out the reaction N-octanoyl-(2S)-hydroxyglycine = octanamide + glyoxylate. PAM activity is inhibited by EDTA, phenylglyoxal and diethyl pyrocarbonate. PAL activity is stimulated by cadmium and inhibited by mercury. Functionally, bifunctional enzyme that catalyzes amidation of the C-terminus of proteins. Alpha-amidation is present at the C-terminus of many endocrine hormones and neuropeptides and is required for their activity. C-terminal amidation also takes place in response to protein fragmentation triggered by oxidative stress, promoting degradation of amidated protein fragments by the proteasome. Alpha-amidation involves two sequential reactions, both of which are catalyzed by separate catalytic domains of the enzyme. The first step, catalyzed by peptidyl alpha-hydroxylating monooxygenase (PHM) domain, is the copper-, ascorbate-, and O2- dependent stereospecific hydroxylation (with S stereochemistry) at the alpha-carbon (C-alpha) of the C-terminal glycine of the peptidylglycine substrate. The second step, catalyzed by the peptidylglycine amidoglycolate lyase (PAL) domain, is the zinc-dependent cleavage of the N-C-alpha bond, producing the alpha-amidated peptide and glyoxylate. Similarly, catalyzes the two-step conversion of an N-fatty acylglycine to a primary fatty acid amide and glyoxylate. This Homo sapiens (Human) protein is Peptidyl-glycine alpha-amidating monooxygenase.